The sequence spans 943 residues: Translation initiation factor IF-2 (943 aa).

Disordered stretches follow at residues 96–229 (FIKR…ERRR) and 243–352 (AAPK…QRQQ). Residues 104–116 (DAPSDAAESAPSA) are compositionally biased toward low complexity. Basic and acidic residues-rich tracts occupy residues 120 to 163 (ELVR…EERA) and 171 to 229 (AEKK…ERRR). Positions 278–293 (ATGSGTGARAAAPSAP) are enriched in low complexity. Basic and acidic residues predominate over residues 313 to 323 (TTKKKEIKTRG). A tr-type G domain is found at 443 to 612 (SRAPVVTVMG…LLQAEVLELK (170 aa)). The interval 452–459 (GHVDHGKT) is G1. Position 452–459 (452–459 (GHVDHGKT)) interacts with GTP. Residues 477–481 (GITQH) are G2. The tract at residues 498-501 (DTPG) is G3. GTP-binding positions include 498–502 (DTPGH) and 552–555 (TKAD). Positions 552-555 (TKAD) are G4. Positions 588-590 (SSK) are G5.

This sequence belongs to the TRAFAC class translation factor GTPase superfamily. Classic translation factor GTPase family. IF-2 subfamily.

It localises to the cytoplasm. Its function is as follows. One of the essential components for the initiation of protein synthesis. Protects formylmethionyl-tRNA from spontaneous hydrolysis and promotes its binding to the 30S ribosomal subunits. Also involved in the hydrolysis of GTP during the formation of the 70S ribosomal complex. The chain is Translation initiation factor IF-2 from Acidovorax sp. (strain JS42).